The chain runs to 255 residues: SLA class II histocompatibility antigen, DQ haplotype D alpha chain (255 aa).

A signal peptide spans 1-23 (MVPGRVLMWGALALTAVMSACGG). Positions 24-120 (EDIAADHVAS…QVPEVTVFPK (97 aa)) are alpha-1. Over 24–217 (EDIAADHVAS…IPAPMSELTE (194 aa)) the chain is Extracellular. N-linked (GlcNAc...) asparagine glycosylation is found at Asn104 and Asn144. The Ig-like C1-type domain maps to 113-205 (PEVTVFPKSP…LDKPLLKHWE (93 aa)). The tract at residues 121–204 (SPVMLGQPNT…GLDKPLLKHW (84 aa)) is alpha-2. Cys133 and Cys189 are joined by a disulfide. Positions 205–217 (EPEIPAPMSELTE) are connecting peptide. Residues 218-240 (TVVCALGLIVGLVGIVVGTVFII) traverse the membrane as a helical segment. The Cytoplasmic segment spans residues 241–255 (QGLRSGGPSRHQGSL).

This sequence belongs to the MHC class II family.

It localises to the membrane. The polypeptide is SLA class II histocompatibility antigen, DQ haplotype D alpha chain (Sus scrofa (Pig)).